Reading from the N-terminus, the 402-residue chain is WAT1-related protein At5g07050 (402 aa).

Transmembrane regions (helical) follow at residues 20 to 40, 48 to 68, 74 to 94, 109 to 129, 149 to 169, 196 to 216, 229 to 249, 266 to 286, 293 to 313, and 318 to 338; these read FAMI…KISL, VLVV…AFFF, PKIT…GPVI, TFSC…AVLF, VVTV…VELF, FLKG…LFVL, LSLT…VTFV, LAAA…QGIV, VFAT…GSFV, and IFLG…AVLW. EamA domains lie at 29 to 159 and 208 to 337; these read YAGM…MLMT and LAWA…YAVL.

It belongs to the drug/metabolite transporter (DMT) superfamily. Plant drug/metabolite exporter (P-DME) (TC 2.A.7.4) family.

It is found in the membrane. In Arabidopsis thaliana (Mouse-ear cress), this protein is WAT1-related protein At5g07050.